The following is a 289-amino-acid chain: NFIL3 like protein (289 aa).

A disordered region spans residues 1–27 (MDVGFSGLPDVSQSHSKTLWGARGRGP). The 64-residue stretch at 42–105 (DTVYWEKRRK…GLLPLTGGPR (64 aa)) folds into the bZIP domain. Positions 48 to 64 (KRRKNNEAAKRSREKRR) are basic motif. A leucine-zipper region spans residues 70 to 91 (IEGRLAALMEENALLKGELKAL).

This sequence belongs to the bZIP family. NFIL3 subfamily.

It localises to the nucleus. This Homo sapiens (Human) protein is NFIL3 like protein.